Here is a 149-residue protein sequence, read N- to C-terminus: MSQTLQAAYAAKRKARRFAVQGIYEWQMSRNPVHEIEARTRVENAMHKVDLGYYHELLTQVVAQHETLDTLLVPVLDRELNALDGVELATLRLGAYELRDHLEIPYRVVLDEAIELAKHFGGADSHKYINGVLDRLASRLREAEKQQAN.

The protein belongs to the NusB family.

Its function is as follows. Involved in transcription antitermination. Required for transcription of ribosomal RNA (rRNA) genes. Binds specifically to the boxA antiterminator sequence of the ribosomal RNA (rrn) operons. The chain is Transcription antitermination protein NusB from Acinetobacter baylyi (strain ATCC 33305 / BD413 / ADP1).